The primary structure comprises 926 residues: Peripheral plasma membrane protein CASK (926 aa).

A Protein kinase domain is found at 12–276 (YELCEVIGKG…VYEALNHPWL (265 aa)). ATP is bound by residues 18–26 (IGKGPFSVV) and K41. A Phosphoserine modification is found at S51. The active site involves D141. Phosphoserine; by autocatalysis occurs at positions 151 and 155. T182 carries the post-translational modification Phosphothreonine. The calmodulin-binding stretch occupies residues 305 to 315 (KGAVLAAVSSH). At S313 the chain carries Phosphoserine. L27 domains are found at residues 343-398 (AERA…SPQI) and 402-455 (PSDA…YSDE). Residues 482–909 (MENVTRVRLV…DETIRHLEEA (428 aa)) are required for interaction with NRXN1 (via C-terminal tail). Residues 490 to 571 (LVQFQKNTDE…SITFKIVPSY (82 aa)) enclose the PDZ domain. Phosphoserine occurs at positions 570 and 571. Residues 574 to 610 (QSSSCERDSPSTSRQSPANGHSSTNNSVSDLPSTTQP) are disordered. Positions 612 to 682 (GRQIYVRAQF…PSPELQEWRV (71 aa)) constitute an SH3 domain. The Guanylate kinase-like domain maps to 739–911 (RKTLVLLGAH…TIRHLEEAVE (173 aa)).

It in the N-terminal section; belongs to the protein kinase superfamily. CAMK Ser/Thr protein kinase family. CaMK subfamily. The protein belongs to the MAGUK family. As to quaternary structure, CASK and LIN7 form a tripartite complex with CASKIN1. Component of the brain-specific heterotrimeric complex (LIN-10-LIN-2-LIN-7 complex) composed of at least APBA1, CASK, and LIN7, which associates with the motor protein KIF17 to transport vesicles along microtubules. Forms a heterotrimeric complex with DLG1 and LIN7B via their L27 domains. Identified in a complex with ACTN4, IQGAP1, MAGI2, NPHS1, SPTAN1 and SPTBN1. Part of a complex containing CASK, TBR1 and TSPYL2. Interacts with WHRN. Interacts (via the PDZ, SH3 and guanylate kinase-like domains) with NRXN1 (via C-terminus). Interacts with CASKIN1, APBA1, LIN7(A/B/C), and L27 domain of DLG1 and isoform 2 of DLG4. Interacts with FCHSD2. Interacts with KIRREL3. Interacts with TBR1. Interacts with TSPYL2. It depends on Unlike other protein kinases, does not require a divalent cation such as magnesium for catalytic activity. as a cofactor.

It localises to the nucleus. The protein localises to the cytoplasm. The protein resides in the cell membrane. It carries out the reaction L-seryl-[protein] + ATP = O-phospho-L-seryl-[protein] + ADP + H(+). It catalyses the reaction L-threonyl-[protein] + ATP = O-phospho-L-threonyl-[protein] + ADP + H(+). With respect to regulation, differs from archetypal CaMK members in that the kinase domain exhibits a constitutively active conformation and the autoinhibitory region does not engage in direct contact with the ATP-binding cleft, although it still binds Ca(2+)/CAM. Multidomain scaffolding Mg(2+)-independent protein kinase that catalyzes the phosphotransfer from ATP to proteins such as NRXN1, and plays a role in synaptic transmembrane protein anchoring and ion channel trafficking. Contributes to neural development and regulation of gene expression via interaction with the transcription factor TBR1. Binds to cell-surface proteins, including amyloid precursor protein, neurexins, and syndecans. May mediate a link between the extracellular matrix and the actin cytoskeleton via its interaction with syndecan and with the actin/spectrin-binding protein 4.1. Component of the LIN-10-LIN-2-LIN-7 complex, which associates with the motor protein KIF17 to transport vesicles containing N-methyl-D-aspartate (NMDA) receptor subunit NR2B along microtubules. This is Peripheral plasma membrane protein CASK from Mus musculus (Mouse).